The following is a 415-amino-acid chain: Serine hydroxymethyltransferase (415 aa).

Residues leucine 119 and 123–125 (GHL) contribute to the (6S)-5,6,7,8-tetrahydrofolate site. Lysine 228 is subject to N6-(pyridoxal phosphate)lysine. Residue 353 to 355 (SPF) participates in (6S)-5,6,7,8-tetrahydrofolate binding.

It belongs to the SHMT family. As to quaternary structure, homodimer. Pyridoxal 5'-phosphate is required as a cofactor.

The protein localises to the cytoplasm. The enzyme catalyses (6R)-5,10-methylene-5,6,7,8-tetrahydrofolate + glycine + H2O = (6S)-5,6,7,8-tetrahydrofolate + L-serine. The protein operates within one-carbon metabolism; tetrahydrofolate interconversion. It participates in amino-acid biosynthesis; glycine biosynthesis; glycine from L-serine: step 1/1. In terms of biological role, catalyzes the reversible interconversion of serine and glycine with tetrahydrofolate (THF) serving as the one-carbon carrier. Also exhibits THF-independent aldolase activity toward beta-hydroxyamino acids, producing glycine and aldehydes, via a retro-aldol mechanism. The polypeptide is Serine hydroxymethyltransferase (Halorubrum lacusprofundi (strain ATCC 49239 / DSM 5036 / JCM 8891 / ACAM 34)).